Reading from the N-terminus, the 1487-residue chain is Major viral transcription factor ICP4 homolog (1487 aa).

3 disordered regions span residues A41 to G295, L310 to A370, and P803 to R1007. Residues V66–E75 show a composition bias toward pro residues. 2 stretches are compositionally biased toward low complexity: residues P165–S193 and D201–S213. Residues D214–E224 show a composition bias toward acidic residues. Residues A235–G272 show a composition bias toward low complexity. The segment covering A273–S285 has biased composition (pro residues). Low complexity-rich tracts occupy residues S807–S829, P849–Q860, and A867–Q877. Residues T878–R893 show a composition bias toward polar residues. Positions H920 to K929 are enriched in basic residues. Residues A938–A951 show a composition bias toward low complexity. Residues G988–R1007 show a composition bias toward basic and acidic residues.

Belongs to the herpesviridae ICP4 family. A long stretch of serine residues may be a major site of phosphorylation.

The protein localises to the host nucleus. Functionally, this IE protein is a multifunctional protein capable of migrating to the nucleus, binding to DNA, trans-activating other viral genes, and autoregulating its own synthesis. This is Major viral transcription factor ICP4 homolog (IE) from Equus caballus (Horse).